The following is an 858-amino-acid chain: Heat shock protein 105 kDa (858 aa).

Serine 2 carries the N-acetylserine modification. N6-acetyllysine is present on lysine 471. 2 disordered regions span residues 500–584 and 796–858; these read KVPT…PPEA and CEPV…MDLD. The segment covering 504 to 514 has biased composition (acidic residues); that stretch reads EENEMSSEADM. Phosphoserine occurs at positions 509 and 510. Residues 532–554 are compositionally biased toward polar residues; the sequence is QQDNSEAGTQPQVQTDAQQTSQS. Serine 557 bears the Phosphoserine mark. Position 561 is a phosphothreonine (threonine 561). Composition is skewed to basic and acidic residues over residues 563-584 and 805-814; these read EENKIPDADKANEKKVDQPPEA and PKIESPKLER. The residue at position 809 (serine 809) is a Phosphoserine. Phosphothreonine is present on threonine 815. The segment covering 821–832 has biased composition (basic and acidic residues); that stretch reads IDKKEEDLEDKN. Over residues 849–858 the composition is skewed to polar residues; it reads EKNSVNMDLD.

Belongs to the heat shock protein 70 family. As to quaternary structure, interacts with HSPA8/HSC70. Interacts with HSPA1A (via NBD) and HSPA1B (via NBD). Phosphorylation on Ser-509 may be important for regulation of the HSPA8/HSC70 chaperone activity. As to expression, highly expressed in testis. Present at lower levels in most brain regions, except cerebellum. Overexpressed in cancer cells.

Its subcellular location is the cytoplasm. Its function is as follows. Acts as a nucleotide-exchange factor (NEF) for chaperone proteins HSPA1A and HSPA1B, promoting the release of ADP from HSPA1A/B thereby triggering client/substrate protein release. Prevents the aggregation of denatured proteins in cells under severe stress, on which the ATP levels decrease markedly. Inhibits HSPA8/HSC70 ATPase and chaperone activities. This is Heat shock protein 105 kDa (HSPH1) from Homo sapiens (Human).